The primary structure comprises 445 residues: Tubulin beta chain (445 aa).

GTP contacts are provided by Gln-11, Glu-69, Ser-138, Gly-142, Thr-143, Gly-144, Asn-204, and Asn-226. Mg(2+) is bound at residue Glu-69.

Belongs to the tubulin family. In terms of assembly, dimer of alpha and beta chains. A typical microtubule is a hollow water-filled tube with an outer diameter of 25 nm and an inner diameter of 15 nM. Alpha-beta heterodimers associate head-to-tail to form protofilaments running lengthwise along the microtubule wall with the beta-tubulin subunit facing the microtubule plus end conferring a structural polarity. Microtubules usually have 13 protofilaments but different protofilament numbers can be found in some organisms and specialized cells. Mg(2+) serves as cofactor.

It localises to the cytoplasm. The protein resides in the cytoskeleton. Functionally, tubulin is the major constituent of microtubules, a cylinder consisting of laterally associated linear protofilaments composed of alpha- and beta-tubulin heterodimers. Microtubules grow by the addition of GTP-tubulin dimers to the microtubule end, where a stabilizing cap forms. Below the cap, tubulin dimers are in GDP-bound state, owing to GTPase activity of alpha-tubulin. This chain is Tubulin beta chain, found in Coprinopsis cinerea (strain Okayama-7 / 130 / ATCC MYA-4618 / FGSC 9003) (Inky cap fungus).